We begin with the raw amino-acid sequence, 169 residues long: MQFRVGLGKKKYRIKPRAEQKNKFWIGGVEIEDSKYIYDHDASDDASDVIQLAVADALFGATALGDGQIVFNKEKTQIPLKGNPRKEAPRILARTYNFIRKNWYINNIDITLEIPSQQKMDDYKHAIFDFICTALRITELTINLKVREPLNPNEISCLAVVLVERQRLK.

This is an uncharacterized protein from Mycoplasma pneumoniae (strain ATCC 29342 / M129 / Subtype 1) (Mycoplasmoides pneumoniae).